Consider the following 779-residue polypeptide: Acyl-homoserine lactone acylase PvdQ (779 aa).

The N-terminal stretch at 1 to 25 (MIISRPLCSFVFAGLSFAVILPAQA) is a signal peptide. The propeptide at 202-223 (AQQAQALQLAAARNQRFALERG) is spacer peptide. Residue Ser224 is the Nucleophile of the active site. A compositionally biased stretch (polar residues) spans 731 to 746 (ESSNPQSAHSSDQTEA). The interval 731–750 (ESSNPQSAHSSDQTEAFSKK) is disordered.

It belongs to the peptidase S45 family. Heterodimer of an alpha subunit and a beta subunit processed from the same precursor.

Its subcellular location is the periplasm. It catalyses the reaction an N-acyl-L-homoserine lactone + H2O = L-homoserine lactone + a carboxylate. Functionally, catalyzes the deacylation of acyl-homoserine lactone (AHL or acyl-HSL), releasing homoserine lactone (HSL) and the corresponding fatty acid. Possesses a specificity for the degradation of long-chain acyl-HSLs (side chains of 11 to 14 carbons in length). In Pseudomonas syringae pv. syringae (strain B728a), this protein is Acyl-homoserine lactone acylase PvdQ (pvdQ).